Reading from the N-terminus, the 129-residue chain is M-zodatoxin-Lt8a (129 aa).

The first 20 residues, 1 to 20 (MKYFVVALALVAAFACIAES), serve as a signal peptide directing secretion. A propeptide spanning residues 21–60 (KPAESEHELAEVEEENELADLEDAVWLEHLADLSDLEEAR) is cleaved from the precursor. Positions 57–60 (EEAR) match the Processing quadruplet motif motif.

Belongs to the cationic peptide 06 (cytoinsectotoxin) family. Post-translationally, cleavage of the propeptide depends on the processing quadruplet motif (XXXR, with at least one of X being E). Expressed by the venom gland.

The protein localises to the secreted. Its function is as follows. Insecticidal, cytolytic and antimicrobial peptide. Has insecticidal activity against the flesh fly S.carnaria, and against the cockroach N.cinerea. Has insecticidal activity against D.melanogaster. Has hemolytic activity against human erythrocytes (EC(50)=6 uM). Has cytolytic activity against insect Sf9 cells (EC(50)=1 uM) and human leukocytes (EC(50)=3 uM). Has antibacterial activity against the Gram-positive bacteria A.globiformis VKM Ac-1112 (MIC=0.5 uM), and B.subtilis VKM B-501 (MIC=0.6-0.9 uM), and against the Gram-negative bacteria E.coli C600 (MIC=0.5 uM), E.coli DH5alpha (MIC=0.9 uM), E.coli MH1 (MIC=0.5 uM), P.aeruginosa PAO1 (MIC=1.9 uM), and P.fluorescens VKM B-894 (MIC=3.8 uM). Lacks antimicrobial activity against the Gram-positive bacteria M.luteus and S.aureus, and against the Gram-negative bacterium S.marcescens. Forms voltage-dependent, ion-permeable channels in membranes. At high concentration causes cell membrane lysis. The chain is M-zodatoxin-Lt8a (cit 1-1) from Lachesana tarabaevi (Spider).